The following is a 118-amino-acid chain: Large ribosomal subunit protein bL20 (118 aa).

This sequence belongs to the bacterial ribosomal protein bL20 family.

Functionally, binds directly to 23S ribosomal RNA and is necessary for the in vitro assembly process of the 50S ribosomal subunit. It is not involved in the protein synthesizing functions of that subunit. The protein is Large ribosomal subunit protein bL20 of Pseudoalteromonas atlantica (strain T6c / ATCC BAA-1087).